A 191-amino-acid chain; its full sequence is Probable ribosome biogenesis protein RLP24 (191 aa).

Ser136 bears the Phosphoserine mark.

Belongs to the eukaryotic ribosomal protein eL24 family. As to quaternary structure, associated with nucleolar and cytoplasmic pre-60S particles. At the end of biogenesis it dissociates from cytoplasmic pre-60S particles and is likely to be exchanged for its ribosomal homologue, RPL24.

Its subcellular location is the nucleus. It localises to the nucleolus. Functionally, involved in the biogenesis of the 60S ribosomal subunit. Ensures the docking of NOG1 to pre-60S particles. The protein is Probable ribosome biogenesis protein RLP24 (RpL24-like) of Drosophila melanogaster (Fruit fly).